Reading from the N-terminus, the 51-residue chain is Sperm protamine P1 (51 aa).

Belongs to the protamine P1 family. Testis.

The protein localises to the nucleus. It is found in the chromosome. In terms of biological role, protamines substitute for histones in the chromatin of sperm during the haploid phase of spermatogenesis. They compact sperm DNA into a highly condensed, stable and inactive complex. The chain is Sperm protamine P1 (PRM1) from Trachypithecus francoisi (Francois' leaf monkey).